A 235-amino-acid chain; its full sequence is Chaperone protein TorD (235 aa).

This sequence belongs to the TorD/DmsD family. TorD subfamily.

It localises to the cytoplasm. Involved in the biogenesis of TorA. Acts on TorA before the insertion of the molybdenum cofactor and, as a result, probably favors a conformation of the apoenzyme that is competent for acquiring the cofactor. The sequence is that of Chaperone protein TorD from Shewanella amazonensis (strain ATCC BAA-1098 / SB2B).